Reading from the N-terminus, the 567-residue chain is MGRGSVTSLAPGFRFHPTDEELVRYYLKRKVCNKPFKFDAISVTDIYKSEPWDLPDKSKLKSRDLEWYFFSMLDKKYSNGSKTNRATEKGYWKTTGKDREIRNGSRVVGMKKTLVYHKGRAPRGERTNWVMHEYRLSDEDLKKAGVPQEAYVLCRIFQKSGTGPKNGEQYGAPYLEEEWEEDGMTYVPAQDAFSEGLALNDDVYVDIDDIDEKPENLVVYDAVPILPNYCHGESSNNVESGNYSDSGNYIQPGNNVVDSGGYFEQPIETFEEDRKPIIREGSIQPCSLFPEEQIGCGVQDENVVNLESSNNNVFVADTCYSDIPIDHNYLPDEPFMDPNNNLPLNDGLYLETNDLSCAQQDDFNFEDYLSFFDDEGLTFDDSLLMGPEDFLPNQEALDQKPAPKELEKEVAGGKEAVEEKESGEGSSSKQDTDFKDFDSAPKYPFLKKTSHMLGAIPTPSSFASQFQTKDAMRLHAAQSSGSVHVTAGMMRISNMTLAADSGMGWSYDKNGNLNVVLSFGVVQQDDAMTASGSKTGITATRAMLVFMCLWVLLLSVSFKIVTMVSAR.

In terms of domain architecture, NAC spans leucine 9–lysine 159. The DNA-binding element occupies valine 108–lysine 165. The interval asparagine 393–aspartate 436 is disordered. Residues leucine 397 to glycine 423 are compositionally biased toward basic and acidic residues. Residues leucine 544–valine 564 form a helical membrane-spanning segment.

In terms of tissue distribution, expressed in root meristem. Expressed in roots, rosette leaves, cauline leaves, shoot apex, stems and flowers.

The protein localises to the membrane. Its subcellular location is the nucleus. In terms of biological role, transcriptional activator activated by proteolytic cleavage through regulated intramembrane proteolysis (RIP). Transcripition activator associated with the induction of genes related to flavonoid biosynthesis and required for the accumulation of anthocyanins in response to high light stress. Plays a role in the regulation of 20S and 26S proteasomes in response to high light stress. The chain is NAC domain-containing protein 78 (NAC078) from Arabidopsis thaliana (Mouse-ear cress).